The following is a 261-amino-acid chain: Imidazole glycerol phosphate synthase subunit HisF (261 aa).

Catalysis depends on residues D16 and D135.

This sequence belongs to the HisA/HisF family. Heterodimer of HisH and HisF.

It is found in the cytoplasm. The enzyme catalyses 5-[(5-phospho-1-deoxy-D-ribulos-1-ylimino)methylamino]-1-(5-phospho-beta-D-ribosyl)imidazole-4-carboxamide + L-glutamine = D-erythro-1-(imidazol-4-yl)glycerol 3-phosphate + 5-amino-1-(5-phospho-beta-D-ribosyl)imidazole-4-carboxamide + L-glutamate + H(+). It participates in amino-acid biosynthesis; L-histidine biosynthesis; L-histidine from 5-phospho-alpha-D-ribose 1-diphosphate: step 5/9. In terms of biological role, IGPS catalyzes the conversion of PRFAR and glutamine to IGP, AICAR and glutamate. The HisF subunit catalyzes the cyclization activity that produces IGP and AICAR from PRFAR using the ammonia provided by the HisH subunit. The chain is Imidazole glycerol phosphate synthase subunit HisF from Mycolicibacterium smegmatis (strain ATCC 700084 / mc(2)155) (Mycobacterium smegmatis).